The following is an 802-amino-acid chain: MAKRSSLSIRIVEGKNLPAKDITGSSDPYCIVKVDNEPIIRTATVWKTLCPFWGEDYQVHLPPTFHTVAFYVMDEDALSRDDVIGKVCLTRDALASHPKGFSGWTHLVEVDPNEEVQGEIHLRLEVVPGVHASRLRCAVLEARDLAPKDRNGASDPFVRVHYNGRTQETSVVKKSCYPRWNETFDFELEKGASEALLVEAWDWDLVSRNDFLGKVAVNVQRLCSAQQEEGWFRLQPDQSKSRQGKGNLGSLQLEVRLRDETVLPSVCYQPLVQLLCQEVKLGTQGPGRLIPVIEETTSAECRQEVATTLLKLFLGQGLAKDFLDLLFQLELGRTSEANTLFRSNSLASKSMESFLKVAGMRYLHGILGPIIDRVFEEKKYVELDPSKVEVKDVGCSGLHRPQTEAEVLEQSAQTLRAHLVALLSAICRSVRTCPAIIRATFRQLFRRVRERFPNAQHQNVPFIAVTSFLCLRFFSPAILSPKLFHLRERHADARTSRTLLLLAKAVQNIGNMDTPVSRAKESWMEPLQPTVRQGVAQLKDFIMKLVDIEEKEELDLQRALNSQAPPVKEGPLFIHRTKGKGPLASSSFKKLYFSLTTEALSFAKTSSSKKSTFIKLASIRAAEKVEEKSFGSSHIMQVIYADDVGRAQTVYLQCKCVNELNQWLSALRKASTNNRGLLRSYHPGIFRGDKWSCCHQKDKTDQGCDKTHSRVTLQEWNDPLDHDLEAQLIYRHLLGVEAALRERYQLLRGATEAGVSPTGCDGAPEDSLAQLLRVLQDLREAHGSSLASPAAREPHHLLELQT.

C2 domains are found at residues 1–105 (MAKR…SGWT) and 116–232 (VQGE…EGWF). Ca(2+) is bound by residues Asp21, Asp27, Asp74, Asp76, Ser79, Asp82, Asp149, Asp155, Asp202, Asp204, Ser207, and Asp210. Positions 317–545 (GLAKDFLDLL…AQLKDFIMKL (229 aa)) constitute a Ras-GAP domain. In terms of domain architecture, PH spans 565–672 (PPVKEGPLFI…WLSALRKAST (108 aa)). A Btk-type zinc finger spans residues 674 to 710 (NRGLLRSYHPGIFRGDKWSCCHQKDKTDQGCDKTHSR). 4 residues coordinate Zn(2+): His682, Cys693, Cys694, and Cys704.

Ca(2+) is required as a cofactor. As to expression, isoform 2 is expressed in osteoblasts.

Its subcellular location is the cytoplasm. The protein resides in the cytosol. It localises to the cell membrane. Ca(2+)-dependent Ras GTPase-activating protein, that switches off the Ras-MAPK pathway following a stimulus that elevates intracellular calcium. Functions as an adaptor for Cdc42 and Rac1 during FcR-mediated phagocytosis. Isoform 2 activates the Ras pathway and promotes RANKL shedding by modulating the expression of MMP14. The protein is Ras GTPase-activating protein 4 (Rasa4) of Mus musculus (Mouse).